The sequence spans 315 residues: NAD kinase (315 aa).

Catalysis depends on D91, which acts as the Proton acceptor. Residues 91–92 (DG), R96, 165–166 (NE), D195, and 206–211 (TAYAFS) each bind NAD(+).

It belongs to the NAD kinase family. The cofactor is a divalent metal cation.

The protein localises to the cytoplasm. The enzyme catalyses NAD(+) + ATP = ADP + NADP(+) + H(+). Involved in the regulation of the intracellular balance of NAD and NADP, and is a key enzyme in the biosynthesis of NADP. Catalyzes specifically the phosphorylation on 2'-hydroxyl of the adenosine moiety of NAD to yield NADP. The polypeptide is NAD kinase (Rhodococcus erythropolis (strain PR4 / NBRC 100887)).